We begin with the raw amino-acid sequence, 473 residues long: Aspartyl/glutamyl-tRNA(Asn/Gln) amidotransferase subunit B (473 aa).

This sequence belongs to the GatB/GatE family. GatB subfamily. Heterotrimer of A, B and C subunits.

The enzyme catalyses L-glutamyl-tRNA(Gln) + L-glutamine + ATP + H2O = L-glutaminyl-tRNA(Gln) + L-glutamate + ADP + phosphate + H(+). It catalyses the reaction L-aspartyl-tRNA(Asn) + L-glutamine + ATP + H2O = L-asparaginyl-tRNA(Asn) + L-glutamate + ADP + phosphate + 2 H(+). Functionally, allows the formation of correctly charged Asn-tRNA(Asn) or Gln-tRNA(Gln) through the transamidation of misacylated Asp-tRNA(Asn) or Glu-tRNA(Gln) in organisms which lack either or both of asparaginyl-tRNA or glutaminyl-tRNA synthetases. The reaction takes place in the presence of glutamine and ATP through an activated phospho-Asp-tRNA(Asn) or phospho-Glu-tRNA(Gln). The polypeptide is Aspartyl/glutamyl-tRNA(Asn/Gln) amidotransferase subunit B (Sulfurisphaera tokodaii (strain DSM 16993 / JCM 10545 / NBRC 100140 / 7) (Sulfolobus tokodaii)).